We begin with the raw amino-acid sequence, 411 residues long: Ubiquitin-binding protein CUE5 (411 aa).

Positions 1-12 (MEEKEGIKDSSL) are enriched in basic and acidic residues. 2 disordered regions span residues 1–102 (MEEK…NPIL) and 142–411 (ESGK…DDEM). Residue Lys15 forms a Glycyl lysine isopeptide (Lys-Gly) (interchain with G-Cter in ubiquitin) linkage. Phosphoserine occurs at positions 21 and 36. The span at 25-58 (DISKTTDVDLNSDGKKDNDTSAKDGTPKVEEKVN) shows a compositional bias: basic and acidic residues. A Glycyl lysine isopeptide (Lys-Gly) (interchain with G-Cter in ubiquitin) cross-link involves residue Lys59. Phosphothreonine is present on Thr70. Lys76 is covalently cross-linked (Glycyl lysine isopeptide (Lys-Gly) (interchain with G-Cter in ubiquitin)). Phosphoserine is present on Ser91. The region spanning 97-140 (KENPILQELKDAFPNLEEKYIKAVIIASQGVLSPAFNALLFLSD) is the CUE domain. A Glycyl lysine isopeptide (Lys-Gly) (interchain with G-Cter in ubiquitin) cross-link involves residue Lys156. At Thr167 the chain carries Phosphothreonine. Residues 209-219 (NPNEREQHHED) are compositionally biased toward basic and acidic residues. Ser220 carries the phosphoserine modification. Over residues 230 to 242 (VEKDLPELTDRAG) the composition is skewed to basic and acidic residues. Polar residues predominate over residues 245–256 (LQDTANKVSNWI). A phosphoserine mark is found at Ser309 and Ser318. Phosphothreonine is present on Thr346. Residue Ser348 is modified to Phosphoserine. A Phosphothreonine modification is found at Thr352. A Glycyl lysine isopeptide (Lys-Gly) (interchain with G-Cter in ubiquitin) cross-link involves residue Lys354. A phosphothreonine mark is found at Thr364 and Thr367. The AIM motif lies at 373–376 (WQPL). Residue Lys396 forms a Glycyl lysine isopeptide (Lys-Gly) (interchain with G-Cter in ubiquitin) linkage. Positions 399-411 (DEDEFLINSDDEM) are enriched in acidic residues. Phosphoserine is present on Ser407.

Interacts with ATG8 (via AIM motif), CLB2, and ubiquitin (via CUE domain).

The protein localises to the cytoplasm. Connects the ubiquitin pathway to autophagy by functioning as a ubiquitin-ATG8 adapter and thus mediating autophagic clearance of ubiquitin conjugates under starvation conditions. The CUE5-dependent selective autophagy pathway plays an important role in clearance of cytotoxic protein aggregates. Not required for cytoplasmic to vacuole pathway (cvt), mitophagy, pexophagy, or ribophagy. The sequence is that of Ubiquitin-binding protein CUE5 from Saccharomyces cerevisiae (strain ATCC 204508 / S288c) (Baker's yeast).